A 217-amino-acid chain; its full sequence is Large ribosomal subunit protein uL1 (217 aa).

It belongs to the universal ribosomal protein uL1 family. In terms of assembly, component of the large ribosomal subunit.

It localises to the cytoplasm. Its function is as follows. Component of the large ribosomal subunit. The ribosome is a large ribonucleoprotein complex responsible for the synthesis of proteins in the cell. This is Large ribosomal subunit protein uL1 (rpl10a) from Xenopus laevis (African clawed frog).